The primary structure comprises 299 residues: AT-hook motif nuclear-localized protein 25 (299 aa).

Disordered regions lie at residues 1-87 and 216-251; these read MSSY…RDSP and EEET…CESN. Basic and acidic residues-rich tracts occupy residues 14 to 23 and 33 to 42; these read HLQRPEDSRT and NRSEADEAKA. 2 stretches are compositionally biased toward low complexity: residues 44–72 and 224–239; these read TTPT…PAGS and TTGV…QSSE. The segment at residues 63 to 75 is a DNA-binding region (a.T hook); it reads RRPRGRPAGSKNK. Residues 87-233 enclose the PPC domain; that stretch reads PNVLRSHVLE…TTGVQQQQPE (147 aa). A compositionally biased stretch (polar residues) spans 240-251; that stretch reads VTGSGAQACESN.

In terms of assembly, homodimer. Interacts with AHL27 and AHL29. As to expression, expressed in seedlings, leaves, stems, floral tips and flowers.

The protein localises to the nucleus. Transcription factor that specifically binds AT-rich DNA sequences related to the nuclear matrix attachment regions (MARs). Binds the DNA sequence GNFEI (GA-negative feedback element I) in the GA3OX1 promoter. Binding to GNFEI sequence is required for GA-negative feedback regulation of GA3OX1. In Arabidopsis thaliana (Mouse-ear cress), this protein is AT-hook motif nuclear-localized protein 25.